The chain runs to 306 residues: Phosphoribosylaminoimidazole-succinocarboxamide synthase (306 aa).

Residue Ser2 is modified to N-acetylserine.

The protein belongs to the SAICAR synthetase family. As to quaternary structure, monomer.

The catalysed reaction is 5-amino-1-(5-phospho-D-ribosyl)imidazole-4-carboxylate + L-aspartate + ATP = (2S)-2-[5-amino-1-(5-phospho-beta-D-ribosyl)imidazole-4-carboxamido]succinate + ADP + phosphate + 2 H(+). The protein operates within purine metabolism; IMP biosynthesis via de novo pathway; 5-amino-1-(5-phospho-D-ribosyl)imidazole-4-carboxamide from 5-amino-1-(5-phospho-D-ribosyl)imidazole-4-carboxylate: step 1/2. Its function is as follows. Catalyzes the reaction of 4-carboxy-5-aminoimidazole ribotide (CAIR) and aspartic acid with the formation of N-succinyl-5-amino-imidazole-4-carboxamide ribotide (SAICAR) in the purine biosynthesis pathway. The chain is Phosphoribosylaminoimidazole-succinocarboxamide synthase (ADE1) from Saccharomyces cerevisiae (strain ATCC 204508 / S288c) (Baker's yeast).